We begin with the raw amino-acid sequence, 223 residues long: Na(+)-translocating NADH-quinone reductase subunit D (223 aa).

Transmembrane regions (helical) follow at residues 42-62 (TVMA…ISMI), 66-86 (IPSS…VIVV), 103-123 (VFVG…AFAM), 131-151 (FFDG…LGFI), and 178-198 (NGLL…IWAL).

This sequence belongs to the NqrDE/RnfAE family. As to quaternary structure, composed of six subunits; NqrA, NqrB, NqrC, NqrD, NqrE and NqrF.

The protein resides in the cell inner membrane. It carries out the reaction a ubiquinone + n Na(+)(in) + NADH + H(+) = a ubiquinol + n Na(+)(out) + NAD(+). In terms of biological role, NQR complex catalyzes the reduction of ubiquinone-1 to ubiquinol by two successive reactions, coupled with the transport of Na(+) ions from the cytoplasm to the periplasm. NqrA to NqrE are probably involved in the second step, the conversion of ubisemiquinone to ubiquinol. This is Na(+)-translocating NADH-quinone reductase subunit D from Pseudomonas paraeruginosa (strain DSM 24068 / PA7) (Pseudomonas aeruginosa (strain PA7)).